Consider the following 422-residue polypeptide: Trigger factor (422 aa).

Positions 158–242 (GDFAVVSLES…VKGLRKKELP (85 aa)) constitute a PPIase FKBP-type domain.

It belongs to the FKBP-type PPIase family. Tig subfamily.

The protein localises to the cytoplasm. It catalyses the reaction [protein]-peptidylproline (omega=180) = [protein]-peptidylproline (omega=0). In terms of biological role, involved in protein export. Acts as a chaperone by maintaining the newly synthesized protein in an open conformation. Functions as a peptidyl-prolyl cis-trans isomerase. This is Trigger factor from Solibacter usitatus (strain Ellin6076).